Consider the following 200-residue polypeptide: 6,7-dimethyl-8-ribityllumazine synthase (200 aa).

5-amino-6-(D-ribitylamino)uracil is bound by residues Trp25, 59-61 (SWE), and 119-121 (VLI). 124–125 (ET) contributes to the (2S)-2-hydroxy-3-oxobutyl phosphate binding site. His127 functions as the Proton donor in the catalytic mechanism. Position 152 (Phe152) interacts with 5-amino-6-(D-ribitylamino)uracil. Position 166 (Arg166) interacts with (2S)-2-hydroxy-3-oxobutyl phosphate.

It belongs to the DMRL synthase family. As to quaternary structure, homopentamer.

The enzyme catalyses (2S)-2-hydroxy-3-oxobutyl phosphate + 5-amino-6-(D-ribitylamino)uracil = 6,7-dimethyl-8-(1-D-ribityl)lumazine + phosphate + 2 H2O + H(+). It functions in the pathway cofactor biosynthesis; riboflavin biosynthesis; riboflavin from 2-hydroxy-3-oxobutyl phosphate and 5-amino-6-(D-ribitylamino)uracil: step 1/2. Functionally, catalyzes the formation of 6,7-dimethyl-8-ribityllumazine by condensation of 5-amino-6-(D-ribitylamino)uracil with 3,4-dihydroxy-2-butanone 4-phosphate. This is the penultimate step in the biosynthesis of riboflavin. This chain is 6,7-dimethyl-8-ribityllumazine synthase, found in Pyricularia oryzae (strain 70-15 / ATCC MYA-4617 / FGSC 8958) (Rice blast fungus).